A 263-amino-acid chain; its full sequence is Isoprenyl transferase (263 aa).

Residue Asp38 is part of the active site. Asp38 provides a ligand contact to Mg(2+). Substrate contacts are provided by residues 39-42 (GNRR), His55, and 83-85 (STD). The active-site Proton acceptor is the Asn86. Substrate contacts are provided by residues Phe87, Arg89, Arg212, and 218–220 (RLS). Glu231 is a binding site for Mg(2+).

It belongs to the UPP synthase family. As to quaternary structure, homodimer. Requires Mg(2+) as cofactor.

In terms of biological role, catalyzes the condensation of isopentenyl diphosphate (IPP) with allylic pyrophosphates generating different type of terpenoids. The chain is Isoprenyl transferase from Thermus thermophilus (strain ATCC 27634 / DSM 579 / HB8).